Here is a 235-residue protein sequence, read N- to C-terminus: Large ribosomal subunit protein uL1 (235 aa).

Belongs to the universal ribosomal protein uL1 family. In terms of assembly, part of the 50S ribosomal subunit.

Binds directly to 23S rRNA. The L1 stalk is quite mobile in the ribosome, and is involved in E site tRNA release. Functionally, protein L1 is also a translational repressor protein, it controls the translation of the L11 operon by binding to its mRNA. This Nitratidesulfovibrio vulgaris (strain ATCC 29579 / DSM 644 / CCUG 34227 / NCIMB 8303 / VKM B-1760 / Hildenborough) (Desulfovibrio vulgaris) protein is Large ribosomal subunit protein uL1.